The following is a 573-amino-acid chain: Delta 8-(E)-sphingolipid desaturase (573 aa).

The region spanning Ser-2–Asp-77 is the Cytochrome b5 heme-binding domain. Heme-binding residues include His-37 and His-60. The chain crosses the membrane as a helical span at residues Leu-228–Leu-248. The short motif at His-260–His-264 is the Histidine box-1 element. Residues Val-273–Trp-293 form a helical membrane-spanning segment. The short motif at His-297–His-301 is the Histidine box-2 element. A run of 3 helical transmembrane segments spans residues Tyr-353 to Met-372, Leu-393 to Pro-413, and Val-422 to Ala-442. Residues Gln-481–His-485 carry the Histidine box-3 motif.

This sequence belongs to the fatty acid desaturase type 1 family.

It localises to the membrane. It carries out the reaction an N-acylsphing-4-enine + 2 Fe(II)-[cytochrome b5] + O2 + 2 H(+) = a (4E,8E)-4-sphinga-4,8-dienine ceramide + 2 Fe(III)-[cytochrome b5] + 2 H2O. It participates in lipid metabolism; sphingolipid metabolism. Its function is as follows. Delta(8)-fatty-acid desaturase which introduces a double bond at the 8-position in the long-chain base (LCB) of ceramides. Required for the formation of the di-unsaturated sphingoid base (E,E)-sphinga-4,8-dienine during glucosylceramide (GluCer) biosynthesis. This Kluyveromyces lactis (Yeast) protein is Delta 8-(E)-sphingolipid desaturase.